A 363-amino-acid chain; its full sequence is UDP-N-acetylglucosamine--N-acetylmuramyl-(pentapeptide) pyrophosphoryl-undecaprenol N-acetylglucosamine transferase (363 aa).

UDP-N-acetyl-alpha-D-glucosamine contacts are provided by residues 12 to 14, R166, S196, and Q291; that span reads TAG.

This sequence belongs to the glycosyltransferase 28 family. MurG subfamily.

The protein localises to the cell inner membrane. The catalysed reaction is di-trans,octa-cis-undecaprenyl diphospho-N-acetyl-alpha-D-muramoyl-L-alanyl-D-glutamyl-meso-2,6-diaminopimeloyl-D-alanyl-D-alanine + UDP-N-acetyl-alpha-D-glucosamine = di-trans,octa-cis-undecaprenyl diphospho-[N-acetyl-alpha-D-glucosaminyl-(1-&gt;4)]-N-acetyl-alpha-D-muramoyl-L-alanyl-D-glutamyl-meso-2,6-diaminopimeloyl-D-alanyl-D-alanine + UDP + H(+). The protein operates within cell wall biogenesis; peptidoglycan biosynthesis. In terms of biological role, cell wall formation. Catalyzes the transfer of a GlcNAc subunit on undecaprenyl-pyrophosphoryl-MurNAc-pentapeptide (lipid intermediate I) to form undecaprenyl-pyrophosphoryl-MurNAc-(pentapeptide)GlcNAc (lipid intermediate II). In Legionella pneumophila (strain Lens), this protein is UDP-N-acetylglucosamine--N-acetylmuramyl-(pentapeptide) pyrophosphoryl-undecaprenol N-acetylglucosamine transferase.